Consider the following 152-residue polypeptide: Endoribonuclease YbeY (152 aa).

Zn(2+) contacts are provided by H113, H117, and H123.

Belongs to the endoribonuclease YbeY family. It depends on Zn(2+) as a cofactor.

The protein localises to the cytoplasm. In terms of biological role, single strand-specific metallo-endoribonuclease involved in late-stage 70S ribosome quality control and in maturation of the 3' terminus of the 16S rRNA. This chain is Endoribonuclease YbeY, found in Janthinobacterium sp. (strain Marseille) (Minibacterium massiliensis).